The chain runs to 128 residues: Glycine cleavage system H protein (128 aa).

One can recognise a Lipoyl-binding domain in the interval 25-107 (TVRVGITDFA…YEGGWLFEIT (83 aa)). An N6-lipoyllysine modification is found at Lys-66.

This sequence belongs to the GcvH family. In terms of assembly, the glycine cleavage system is composed of four proteins: P, T, L and H. It depends on (R)-lipoate as a cofactor.

Functionally, the glycine cleavage system catalyzes the degradation of glycine. The H protein shuttles the methylamine group of glycine from the P protein to the T protein. This chain is Glycine cleavage system H protein, found in Micrococcus luteus (strain ATCC 4698 / DSM 20030 / JCM 1464 / CCM 169 / CCUG 5858 / IAM 1056 / NBRC 3333 / NCIMB 9278 / NCTC 2665 / VKM Ac-2230) (Micrococcus lysodeikticus).